Consider the following 920-residue polypeptide: Probable transport protein MmpL7 (920 aa).

12 consecutive transmembrane segments (helical) span residues 44 to 64, 210 to 230, 241 to 261, 271 to 291, 311 to 331, 344 to 364, 389 to 409, 761 to 781, 790 to 810, 822 to 842, 864 to 884, and 888 to 908; these read LLVV…LTFT, ITAW…VLLL, AIVL…AAVV, VFSW…ATML, LPAF…LLLA, LGVF…IALA, SASA…IIGM, LIHD…LASM, AVGV…IALW, VPLV…VAGI, GAVA…VLVS, and FSVL…LITV.

This sequence belongs to the resistance-nodulation-cell division (RND) (TC 2.A.6) family. MmpL subfamily.

The protein resides in the cell membrane. The polypeptide is Probable transport protein MmpL7 (mmpL7) (Mycobacterium bovis (strain ATCC BAA-935 / AF2122/97)).